We begin with the raw amino-acid sequence, 595 residues long: Elongation factor 4 (595 aa).

Positions 2–183 (KNIRNFCIIA…AIIERISPPT (182 aa)) constitute a tr-type G domain. GTP is bound by residues 14–19 (DHGKST) and 130–133 (NKID).

This sequence belongs to the TRAFAC class translation factor GTPase superfamily. Classic translation factor GTPase family. LepA subfamily.

The protein localises to the cell inner membrane. The enzyme catalyses GTP + H2O = GDP + phosphate + H(+). Functionally, required for accurate and efficient protein synthesis under certain stress conditions. May act as a fidelity factor of the translation reaction, by catalyzing a one-codon backward translocation of tRNAs on improperly translocated ribosomes. Back-translocation proceeds from a post-translocation (POST) complex to a pre-translocation (PRE) complex, thus giving elongation factor G a second chance to translocate the tRNAs correctly. Binds to ribosomes in a GTP-dependent manner. This Amoebophilus asiaticus (strain 5a2) protein is Elongation factor 4.